The following is a 421-amino-acid chain: UDP-N-acetylglucosamine 1-carboxyvinyltransferase (421 aa).

A phosphoenolpyruvate-binding site is contributed by 22 to 23 (KN). R94 is a UDP-N-acetyl-alpha-D-glucosamine binding site. C118 (proton donor) is an active-site residue. C118 is subject to 2-(S-cysteinyl)pyruvic acid O-phosphothioketal. UDP-N-acetyl-alpha-D-glucosamine-binding positions include 123-127 (RPMDL), D308, and I330.

This sequence belongs to the EPSP synthase family. MurA subfamily.

The protein localises to the cytoplasm. The catalysed reaction is phosphoenolpyruvate + UDP-N-acetyl-alpha-D-glucosamine = UDP-N-acetyl-3-O-(1-carboxyvinyl)-alpha-D-glucosamine + phosphate. Its pathway is cell wall biogenesis; peptidoglycan biosynthesis. Functionally, cell wall formation. Adds enolpyruvyl to UDP-N-acetylglucosamine. The sequence is that of UDP-N-acetylglucosamine 1-carboxyvinyltransferase from Ruegeria pomeroyi (strain ATCC 700808 / DSM 15171 / DSS-3) (Silicibacter pomeroyi).